The primary structure comprises 84 residues: Putative ribosomal RNA large subunit methyltransferase H 2 (84 aa).

S-adenosyl-L-methionine contacts are provided by residues Gly33 and 52–57; that span reads FSKMTF.

It belongs to the RNA methyltransferase RlmH family. As to quaternary structure, homodimer.

Its subcellular location is the cytoplasm. The enzyme catalyses pseudouridine(1915) in 23S rRNA + S-adenosyl-L-methionine = N(3)-methylpseudouridine(1915) in 23S rRNA + S-adenosyl-L-homocysteine + H(+). Its function is as follows. Specifically methylates the pseudouridine at position 1915 (m3Psi1915) in 23S rRNA. The polypeptide is Putative ribosomal RNA large subunit methyltransferase H 2 (rlmH2) (Clostridium perfringens (strain SM101 / Type A)).